A 115-amino-acid polypeptide reads, in one-letter code: Sericin-1 (115 aa).

Residues 1–115 are disordered; the sequence is GSSGSSGSSG…GGSSSTSSSN (115 aa).

Produced exclusively in the middle (MSG) section of silk glands.

The protein resides in the secreted. In terms of biological role, provides the silk fibroin thread with a sticky coating. Acts as a cement by sticking silk threads together. In Galleria mellonella (Greater wax moth), this protein is Sericin-1 (SER1).